The chain runs to 170 residues: CASP-like protein 1F1 (170 aa).

The Cytoplasmic segment spans residues 1 to 16; sequence MMGDNEGRRTPLLNLG. The helical transmembrane segment at 17-37 threads the bilayer; that stretch reads VQVSMRVLTIGAAMASMWVMI. The Extracellular portion of the chain corresponds to 38-62; that stretch reads TNREVASVYGIAFEAKYSYSSAFRY. A helical transmembrane segment spans residues 63 to 83; sequence LVYAQIAVCAATLFTLVWACL. The Cytoplasmic segment spans residues 84-88; sequence AVRRR. Residues 89–109 traverse the membrane as a helical segment; it reads GLVFALFFFDLLTTLTAISAF. Residues 110–141 are Extracellular-facing; it reads SAAFAEGYVGKYGNKQAGWLPICGYVHGYCSR. A helical transmembrane segment spans residues 142–162; it reads VTISLAMSFASFILLFILTVL. Topologically, residues 163 to 170 are cytoplasmic; that stretch reads TASAARHY.

It belongs to the Casparian strip membrane proteins (CASP) family. In terms of assembly, homodimer and heterodimers. In flowers, expressed in the anther wall.

It is found in the cell membrane. The chain is CASP-like protein 1F1 from Arabidopsis thaliana (Mouse-ear cress).